We begin with the raw amino-acid sequence, 185 residues long: Orotate phosphoribosyltransferase (185 aa).

5-phospho-alpha-D-ribose 1-diphosphate is bound by residues Arg94, Lys95, Lys98, His100, and 120–128 (EDVTTTGGS). Positions 124 and 152 each coordinate orotate.

It belongs to the purine/pyrimidine phosphoribosyltransferase family. PyrE subfamily. Homodimer. Mg(2+) serves as cofactor.

The enzyme catalyses orotidine 5'-phosphate + diphosphate = orotate + 5-phospho-alpha-D-ribose 1-diphosphate. It functions in the pathway pyrimidine metabolism; UMP biosynthesis via de novo pathway; UMP from orotate: step 1/2. Its function is as follows. Catalyzes the transfer of a ribosyl phosphate group from 5-phosphoribose 1-diphosphate to orotate, leading to the formation of orotidine monophosphate (OMP). The chain is Orotate phosphoribosyltransferase from Thermococcus kodakarensis (strain ATCC BAA-918 / JCM 12380 / KOD1) (Pyrococcus kodakaraensis (strain KOD1)).